Consider the following 69-residue polypeptide: U5-agatoxin-Ao1a (69 aa).

Residues 1 to 20 form the signal peptide; the sequence is MRTIISLLLLSAMVFAVIEA. The propeptide occupies 21–34; the sequence is ISLEEGLQLFEGER. 2 disulfide bridges follow: Cys36/Cys52 and Cys43/Cys57.

The protein belongs to the neurotoxin 01 (U2-agtx) family. Post-translationally, does not contain a cysteine at position 61 which disrupts the cysteine framework. Expressed by the venom gland.

It is found in the secreted. This Agelena orientalis (Funnel-web spider) protein is U5-agatoxin-Ao1a.